The chain runs to 533 residues: Probable nucleolar protein 5-2 (533 aa).

The region spanning 281 to 399 (IAPNLTALVG…LEARLRNLEG (119 aa)) is the Nop domain. Disordered regions lie at residues 401–433 (DLGR…ITPA) and 445–533 (GETS…KSKD). Residues 413-424 (PKIEVYNKDKKM) show a composition bias toward basic and acidic residues. A compositionally biased stretch (basic residues) spans 521–533 (KKDKKEKKKKSKD).

This sequence belongs to the NOP5/NOP56 family.

It is found in the nucleus. The protein localises to the nucleolus. Functionally, required for 60S ribosomal subunit biogenesis. The chain is Probable nucleolar protein 5-2 (NOP5-2) from Arabidopsis thaliana (Mouse-ear cress).